Reading from the N-terminus, the 374-residue chain is MAKRDYYEVLGVERGSSEADLKKAYRRLAMKHHPDRNPDSKESEEMFKEANEAYECLSDPNKRAAYDQYGHAGVDPSMGGGGAGFGGQNFSDIFGDVFSDFFGGGRGGQRGGAQRGSDLRYTLELNLEEAVRGTSVNIRVPTLVNCKPCDGSGAKKGSSPITCPTCGGIGQVRMQQGFFSVQQTCPRCHGQGKIISDPCDSCHGEGRVEEYKTLSVKVPAGVDTGDRIRLSGEGEAGTQGGPTGDLYVVINVREHSIFQRDGKHLFCEVPISFVDAALGGELEIPTLDGRVKLKIPEGTQTGKQFRIRGKGVAPVRGGGAGDLMCRVAVETPVNLGRRQRELLEEFRSSLEGDDSHSPKTTGFFDGVKRFFGDL.

Positions 5 to 70 constitute a J domain; it reads DYYEVLGVER…NKRAAYDQYG (66 aa). The CR-type zinc-finger motif lies at 133 to 211; that stretch reads GTSVNIRVPT…CHGEGRVEEY (79 aa). The Zn(2+) site is built by C146, C149, C163, C166, C185, C188, C199, and C202. CXXCXGXG motif repeat units follow at residues 146-153, 163-170, 185-192, and 199-206; these read CKPCDGSG, CPTCGGIG, CPRCHGQG, and CDSCHGEG.

It belongs to the DnaJ family. In terms of assembly, homodimer. The cofactor is Zn(2+).

The protein resides in the cytoplasm. Its function is as follows. Participates actively in the response to hyperosmotic and heat shock by preventing the aggregation of stress-denatured proteins and by disaggregating proteins, also in an autonomous, DnaK-independent fashion. Unfolded proteins bind initially to DnaJ; upon interaction with the DnaJ-bound protein, DnaK hydrolyzes its bound ATP, resulting in the formation of a stable complex. GrpE releases ADP from DnaK; ATP binding to DnaK triggers the release of the substrate protein, thus completing the reaction cycle. Several rounds of ATP-dependent interactions between DnaJ, DnaK and GrpE are required for fully efficient folding. Also involved, together with DnaK and GrpE, in the DNA replication of plasmids through activation of initiation proteins. This chain is Chaperone protein DnaJ, found in Pseudomonas fluorescens (strain SBW25).